A 633-amino-acid polypeptide reads, in one-letter code: Glutamyl-tRNA(Gln) amidotransferase subunit E (633 aa).

It belongs to the GatB/GatE family. GatE subfamily. As to quaternary structure, heterodimer of GatD and GatE.

The catalysed reaction is L-glutamyl-tRNA(Gln) + L-glutamine + ATP + H2O = L-glutaminyl-tRNA(Gln) + L-glutamate + ADP + phosphate + H(+). Its function is as follows. Allows the formation of correctly charged Gln-tRNA(Gln) through the transamidation of misacylated Glu-tRNA(Gln) in organisms which lack glutaminyl-tRNA synthetase. The reaction takes place in the presence of glutamine and ATP through an activated gamma-phospho-Glu-tRNA(Gln). The GatDE system is specific for glutamate and does not act on aspartate. In Saccharolobus islandicus (strain L.S.2.15 / Lassen #1) (Sulfolobus islandicus), this protein is Glutamyl-tRNA(Gln) amidotransferase subunit E.